The following is a 154-amino-acid chain: Putative pre-16S rRNA nuclease (154 aa).

It belongs to the YqgF nuclease family.

It is found in the cytoplasm. Functionally, could be a nuclease involved in processing of the 5'-end of pre-16S rRNA. The protein is Putative pre-16S rRNA nuclease of Pelotomaculum thermopropionicum (strain DSM 13744 / JCM 10971 / SI).